A 312-amino-acid polypeptide reads, in one-letter code: GATA zinc finger domain-containing protein 20 (312 aa).

Disordered stretches follow at residues Met1–Pro45 and Thr213–Asn232. The segment covering Gln29–Pro45 has biased composition (low complexity). The segment at Cys260–Cys287 adopts a GATA-type zinc-finger fold.

The polypeptide is GATA zinc finger domain-containing protein 20 (gtaT) (Dictyostelium discoideum (Social amoeba)).